A 322-amino-acid polypeptide reads, in one-letter code: MNPLSALFGAGVATRNAMFDRSLLKQQRLRGPVVSVGNLCVGGTGKTPFTQLLGDLLMQREIDFDVLSRGYGRESTEIKIVELDGSPNEFGDEPLLLAKYFAAKKPENPPRVIVGADRYEAGRFAEQKFGPRLHLLDDGFQHRGLARDFDIVLLAPDDADQVLLPVGRLREPLTALKRAHAVVATDEVKIEAFPVMPPLVWRVERDIALPEQLSRNARVLAFCAIARPHRFFTDLRRHGLEPVAELTFRDHHRYSAADIEKIVREISSSRADCCVTTIKDMMNLGELVHRLAPIYAVRLSLKLRDADAALDEIIKIIERRQG.

Position 40-47 (40-47 (CVGGTGKT)) interacts with ATP.

Belongs to the LpxK family.

It carries out the reaction a lipid A disaccharide + ATP = a lipid IVA + ADP + H(+). It participates in glycolipid biosynthesis; lipid IV(A) biosynthesis; lipid IV(A) from (3R)-3-hydroxytetradecanoyl-[acyl-carrier-protein] and UDP-N-acetyl-alpha-D-glucosamine: step 6/6. Functionally, transfers the gamma-phosphate of ATP to the 4'-position of a tetraacyldisaccharide 1-phosphate intermediate (termed DS-1-P) to form tetraacyldisaccharide 1,4'-bis-phosphate (lipid IVA). This chain is Tetraacyldisaccharide 4'-kinase, found in Koribacter versatilis (strain Ellin345).